The primary structure comprises 291 residues: Malectin (291 aa).

The N-terminal stretch at methionine 1 to glycine 30 is a signal peptide. Over proline 31 to serine 268 the chain is Lumenal. The a carbohydrate site is built by tyrosine 81, tyrosine 103, tyrosine 130, phenylalanine 131, and aspartate 200. The disordered stretch occupies residues leucine 220–alanine 264. A compositionally biased stretch (acidic residues) spans glutamate 230–glutamate 240. Positions leucine 244–alanine 264 are enriched in polar residues. Asparagine 267 is a glycosylation site (N-linked (GlcNAc...) asparagine). A helical membrane pass occupies residues serine 269–cysteine 289. Topologically, residues arginine 290 to leucine 291 are cytoplasmic.

This sequence belongs to the malectin family. In terms of assembly, interacts with the oligosaccharyltransferase (OST) complex.

The protein localises to the endoplasmic reticulum membrane. Functionally, carbohydrate-binding protein with a strong ligand preference for Glc2-N-glycan. May play a role in the early steps of protein N-glycosylation. The protein is Malectin of Mus musculus (Mouse).